Reading from the N-terminus, the 72-residue chain is Large ribosomal subunit protein bL31 (72 aa).

This sequence belongs to the bacterial ribosomal protein bL31 family. Type A subfamily. As to quaternary structure, part of the 50S ribosomal subunit.

Binds the 23S rRNA. This is Large ribosomal subunit protein bL31 from Prosthecochloris aestuarii (strain DSM 271 / SK 413).